The chain runs to 318 residues: NADH-ubiquinone oxidoreductase chain 1 (318 aa).

The next 8 helical transmembrane spans lie at 3-23 (LITLLSTIVPILLAVAFLTLV), 70-90 (MFIIAPILALALALTMWTPLP), 100-120 (LGILFMLAMSSLAVYAILWSG), 146-166 (LAIILLSILLMSGSYSLTTLI), 171-191 (YIWLILPSWPLTMMWFISTLA), 222-242 (LFFLAEYANIIMMNALTTILF), 254-273 (LYTTNFATKTLLLTMSFLWI), and 294-314 (LPLTLALCMWYVTMPIMLASI).

Belongs to the complex I subunit 1 family.

Its subcellular location is the mitochondrion inner membrane. It carries out the reaction a ubiquinone + NADH + 5 H(+)(in) = a ubiquinol + NAD(+) + 4 H(+)(out). Its function is as follows. Core subunit of the mitochondrial membrane respiratory chain NADH dehydrogenase (Complex I) that is believed to belong to the minimal assembly required for catalysis. Complex I functions in the transfer of electrons from NADH to the respiratory chain. The immediate electron acceptor for the enzyme is believed to be ubiquinone. The sequence is that of NADH-ubiquinone oxidoreductase chain 1 (MT-ND1) from Phyllostomus elongatus (Lesser spear-nosed bat).